The chain runs to 71 residues: MALPDIAETRKLSDTEINEQISGTRRELFDLRFQQATSRLENPHRFRHARVKLAQLLTVQQERERSAAPAN.

This sequence belongs to the universal ribosomal protein uL29 family.

The sequence is that of Large ribosomal subunit protein uL29 from Synechococcus sp. (strain RCC307).